A 319-amino-acid polypeptide reads, in one-letter code: Aspartate carbamoyltransferase catalytic subunit (319 aa).

Carbamoyl phosphate-binding residues include Arg-55 and Thr-56. An L-aspartate-binding site is contributed by Lys-83. Carbamoyl phosphate-binding residues include Arg-105, His-144, and Gln-147. L-aspartate-binding residues include Arg-177 and Arg-231. Residues Gly-272 and Pro-273 each coordinate carbamoyl phosphate.

The protein belongs to the aspartate/ornithine carbamoyltransferase superfamily. ATCase family. In terms of assembly, heterododecamer (2C3:3R2) of six catalytic PyrB chains organized as two trimers (C3), and six regulatory PyrI chains organized as three dimers (R2).

It catalyses the reaction carbamoyl phosphate + L-aspartate = N-carbamoyl-L-aspartate + phosphate + H(+). It participates in pyrimidine metabolism; UMP biosynthesis via de novo pathway; (S)-dihydroorotate from bicarbonate: step 2/3. Functionally, catalyzes the condensation of carbamoyl phosphate and aspartate to form carbamoyl aspartate and inorganic phosphate, the committed step in the de novo pyrimidine nucleotide biosynthesis pathway. The protein is Aspartate carbamoyltransferase catalytic subunit of Nocardia farcinica (strain IFM 10152).